A 208-amino-acid polypeptide reads, in one-letter code: Small ribosomal subunit protein uS4 (208 aa).

The segment at 32–53 (LNRKRGKNSPGQHGASKVKMSD) is disordered. Residues 99–161 (LRLDNVVYRL…YKSNVIIKKL (63 aa)) enclose the S4 RNA-binding domain.

The protein belongs to the universal ribosomal protein uS4 family. Part of the 30S ribosomal subunit. Contacts protein S5. The interaction surface between S4 and S5 is involved in control of translational fidelity.

In terms of biological role, one of the primary rRNA binding proteins, it binds directly to 16S rRNA where it nucleates assembly of the body of the 30S subunit. Its function is as follows. With S5 and S12 plays an important role in translational accuracy. In Endomicrobium trichonymphae, this protein is Small ribosomal subunit protein uS4.